The primary structure comprises 394 residues: MPMLQNVTILGATGTIGLNTLDVISRHPGRYRVFALTANSRVDELAELCLQHRPRYAVMLDSGAAEKLQQKLKGLETQVLSGLAALEEVAAHPEAHVVMAAIVGAAGLKPAMAAAYAGKRILLANKETLVMAGKLFMQAVEEGGATLLPIDSEHNAIFQVMPPARLSALADGGIRRILLTASGGPFRKSSFAELMAVTPAQALNHPNWVMGPKITIDSATLMNKGLEVIEAHWLFNAPADKIEVVVHPQSVIHSMVEYIDGSVLAQMGNPDMRTPIAYGLGYPERLKAGVNALDLFKVGRLDFEAPDTARFPCLRLAFDALRHGGTAPAILNAANEVAVDAFLNGNIGFQDIPRLIEAVLTAMDIEAVTSISQLIEVDALARAHALEWRQLEAC.

NADPH is bound by residues threonine 13, glycine 14, threonine 15, isoleucine 16, and asparagine 125. Lysine 126 contributes to the 1-deoxy-D-xylulose 5-phosphate binding site. Glutamate 127 contributes to the NADPH binding site. Residue aspartate 151 participates in Mn(2+) binding. Residues serine 152, glutamate 153, serine 182, and histidine 205 each coordinate 1-deoxy-D-xylulose 5-phosphate. Glutamate 153 lines the Mn(2+) pocket. Residue glycine 211 coordinates NADPH. Residues serine 218, asparagine 223, lysine 224, and glutamate 227 each coordinate 1-deoxy-D-xylulose 5-phosphate. A Mn(2+)-binding site is contributed by glutamate 227.

It belongs to the DXR family. Mg(2+) serves as cofactor. Mn(2+) is required as a cofactor.

It catalyses the reaction 2-C-methyl-D-erythritol 4-phosphate + NADP(+) = 1-deoxy-D-xylulose 5-phosphate + NADPH + H(+). It functions in the pathway isoprenoid biosynthesis; isopentenyl diphosphate biosynthesis via DXP pathway; isopentenyl diphosphate from 1-deoxy-D-xylulose 5-phosphate: step 1/6. Its function is as follows. Catalyzes the NADPH-dependent rearrangement and reduction of 1-deoxy-D-xylulose-5-phosphate (DXP) to 2-C-methyl-D-erythritol 4-phosphate (MEP). This is 1-deoxy-D-xylulose 5-phosphate reductoisomerase from Methylobacillus flagellatus (strain ATCC 51484 / DSM 6875 / VKM B-1610 / KT).